We begin with the raw amino-acid sequence, 594 residues long: Protein FAM200C (594 aa).

The protein is Protein FAM200C (FAM200C) of Bos taurus (Bovine).